The chain runs to 279 residues: 2'-N-acetylparomamine deacetylase (279 aa).

Residues histidine 31, aspartate 34, and histidine 157 each contribute to the Zn(2+) site. A disordered region spans residues 245–279; the sequence is PRRWTGGTAGAGHAAGRRGAPHTERVWTPAPAGAR. The segment covering 246–258 has biased composition (low complexity); it reads RRWTGGTAGAGHA.

This sequence belongs to the PIGL family. The cofactor is Zn(2+).

It catalyses the reaction 2'-N-acetylparomamine + H2O = paromamine + acetate. The catalysed reaction is 2'''-acetyl-6'''-hydroxyneomycin C + H2O = 6'''-deamino-6'''-hydroxyneomycin C + acetate. It participates in antibiotic biosynthesis; neomycin biosynthesis. In terms of biological role, deacetylase involved in the biosynthesis of neomycin by mediating 2 steps of the pathway. Deacetylates both 2'-N-acetylparomamine and 2'''-acetyl-6'''-hydroxyneomycin C. This is 2'-N-acetylparomamine deacetylase (neoL) from Streptomyces fradiae (Streptomyces roseoflavus).